A 583-amino-acid chain; its full sequence is MGRPRTARVFMNVRVTTMDAELEFAIQQSTTGKQLFDQVVKTIGLREVWFFGLQYTDSKGDLTWIKLYKKVMSQDVQKGDPLQFKFRAKFYPEDVAEELIQDITLRLFYLQVKNAILSDEIYCPPETSVLLASYAVQARHGDYNKTTHVPGFLVNDRLLPQRVIDQHKMSKDEWENSITTWWQEHRGMLREDAMMEYLKIAQDLEMYGVNYFEIRNKKGTELWLGVDALGLNIYEKDDRLTPKIGFPWSEIRNISFNDRKFIIKPIDKKAPDFVFFAPRVRINKRILALCMGNHELYMRRRKPDTIDVQQMKAQAREEKNAKQQEREKLQLALAARERAEKKQQEYEDRLRTMQEEMERSQANLIEAQEMIRRLEDQLKQLQFAKDELEARQNELQVMIKRLEESKNMEVAERQKLEDEIRAKQEEVQKIQEEVSVKDTETKRLQEEVEEARRKQNEAAAALLAATTTPNHHHVDEEEEDNEEELTNGAENGTSRDYSKDFDTDEHIKDPVEERRTLAERNERLHDQLKALKQDLALSRDDTMETANDKIHRENVRQGRDKYKTLREIRKGNTKRRVDQFENM.

Positions 11 to 301 (MNVRVTTMDA…GNHELYMRRR (291 aa)) constitute an FERM domain. Disordered stretches follow at residues 466–518 (TTTP…RTLA) and 539–558 (RDDT…VRQG). Positions 476–485 (EEEEDNEEEL) are enriched in acidic residues. The segment covering 496–518 (DYSKDFDTDEHIKDPVEERRTLA) has biased composition (basic and acidic residues). Phosphothreonine is present on Thr564.

As to quaternary structure, interacts with cytoskeletal actin.

The protein resides in the cell junction. It is found in the adherens junction. The protein localises to the cell projection. It localises to the microvillus. Its subcellular location is the rhabdomere. The protein resides in the cell membrane. It is found in the cytoplasm. The protein localises to the cytoskeleton. Involved in connections of major cytoskeletal structures to the plasma membrane. This chain is Moesin/ezrin/radixin homolog 1, found in Aedes aegypti (Yellowfever mosquito).